A 132-amino-acid polypeptide reads, in one-letter code: Urease subunit beta (132 aa).

Belongs to the urease beta subunit family. In terms of assembly, heterotrimer of UreA (gamma), UreB (beta) and UreC (alpha) subunits. Three heterotrimers associate to form the active enzyme.

The protein localises to the cytoplasm. It catalyses the reaction urea + 2 H2O + H(+) = hydrogencarbonate + 2 NH4(+). Its pathway is nitrogen metabolism; urea degradation; CO(2) and NH(3) from urea (urease route): step 1/1. This is Urease subunit beta from Natronomonas pharaonis (strain ATCC 35678 / DSM 2160 / CIP 103997 / JCM 8858 / NBRC 14720 / NCIMB 2260 / Gabara) (Halobacterium pharaonis).